The following is a 934-amino-acid chain: Protein translocase subunit SecA (934 aa).

ATP-binding positions include glutamine 87, 105 to 109, and aspartate 515; that span reads GEGKT. Zn(2+) is bound by residues cysteine 918, cysteine 920, cysteine 929, and histidine 930.

This sequence belongs to the SecA family. As to quaternary structure, monomer and homodimer. Part of the essential Sec protein translocation apparatus which comprises SecA, SecYEG and auxiliary proteins SecDF-YajC and YidC. It depends on Zn(2+) as a cofactor.

It localises to the cell inner membrane. It is found in the cytoplasm. The enzyme catalyses ATP + H2O + cellular proteinSide 1 = ADP + phosphate + cellular proteinSide 2.. Part of the Sec protein translocase complex. Interacts with the SecYEG preprotein conducting channel. Has a central role in coupling the hydrolysis of ATP to the transfer of proteins into and across the cell membrane, serving both as a receptor for the preprotein-SecB complex and as an ATP-driven molecular motor driving the stepwise translocation of polypeptide chains across the membrane. The polypeptide is Protein translocase subunit SecA (Ralstonia pickettii (strain 12J)).